Here is a 187-residue protein sequence, read N- to C-terminus: dCTP deaminase (187 aa).

DCTP is bound by residues 110-115, 134-136, Gln155, Tyr169, and Gln179; these read KSTYAR and TLE. Glu136 functions as the Proton donor/acceptor in the catalytic mechanism.

This sequence belongs to the dCTP deaminase family. As to quaternary structure, homotrimer.

The catalysed reaction is dCTP + H2O + H(+) = dUTP + NH4(+). It functions in the pathway pyrimidine metabolism; dUMP biosynthesis; dUMP from dCTP (dUTP route): step 1/2. Catalyzes the deamination of dCTP to dUTP. This Bordetella petrii (strain ATCC BAA-461 / DSM 12804 / CCUG 43448) protein is dCTP deaminase.